The following is a 271-amino-acid chain: Large ribosomal subunit protein uL3c (271 aa).

Residues M1–S49 constitute a chloroplast transit peptide. The interval H190–G222 is disordered.

Belongs to the universal ribosomal protein uL3 family. As to quaternary structure, part of the 50S ribosomal subunit.

The protein localises to the plastid. Its subcellular location is the chloroplast. In terms of biological role, one of the primary rRNA binding proteins, it binds directly near the 3'-end of the 23S rRNA, where it nucleates assembly of the 50S subunit. This chain is Large ribosomal subunit protein uL3c (RPL3A), found in Arabidopsis thaliana (Mouse-ear cress).